Here is a 332-residue protein sequence, read N- to C-terminus: Biotin synthase (332 aa).

The 229-residue stretch at tyrosine 51–arginine 279 folds into the Radical SAM core domain. Residues cysteine 66, cysteine 70, and cysteine 73 each coordinate [4Fe-4S] cluster. Residues cysteine 110, cysteine 142, cysteine 202, and arginine 274 each contribute to the [2Fe-2S] cluster site.

It belongs to the radical SAM superfamily. Biotin synthase family. Homodimer. The cofactor is [4Fe-4S] cluster. [2Fe-2S] cluster serves as cofactor.

The catalysed reaction is (4R,5S)-dethiobiotin + (sulfur carrier)-SH + 2 reduced [2Fe-2S]-[ferredoxin] + 2 S-adenosyl-L-methionine = (sulfur carrier)-H + biotin + 2 5'-deoxyadenosine + 2 L-methionine + 2 oxidized [2Fe-2S]-[ferredoxin]. The protein operates within cofactor biosynthesis; biotin biosynthesis; biotin from 7,8-diaminononanoate: step 2/2. Functionally, catalyzes the conversion of dethiobiotin (DTB) to biotin by the insertion of a sulfur atom into dethiobiotin via a radical-based mechanism. The polypeptide is Biotin synthase (Prochlorococcus marinus (strain SARG / CCMP1375 / SS120)).